A 362-amino-acid polypeptide reads, in one-letter code: G-protein coupled receptor 6 (362 aa).

The Extracellular segment spans residues 1–74; the sequence is MNASAASLND…PGLLLPAVNP (74 aa). Asparagine 2, asparagine 9, and asparagine 51 each carry an N-linked (GlcNAc...) asparagine glycan. The chain crosses the membrane as a helical span at residues 75-94; the sequence is WDVLLCVSGTVIAGENALVV. Residues 95–106 lie on the Cytoplasmic side of the membrane; that stretch reads ALIASTPALRTP. A helical membrane pass occupies residues 107-130; it reads MFVLVGSLATADLLAGCGLILHFV. Residues 131–142 lie on the Extracellular side of the membrane; it reads FQYLVPSETVSL. The chain crosses the membrane as a helical span at residues 143–164; that stretch reads LTVGFLVASFAASVSSLLAITV. Over 165–185 the chain is Cytoplasmic; the sequence is DRYLSLYNALTYYSRRTLLGV. The helical transmembrane segment at 186 to 205 threads the bilayer; it reads HLLLAATWTVSLGLGLLPVL. The Extracellular portion of the chain corresponds to 206-230; it reads GWNCLAERAACSVVRPLARSHVALL. The helical transmembrane segment at 231–249 threads the bilayer; that stretch reads SAAFFMVFGIMLHLYVRIC. Residues 250 to 277 lie on the Cytoplasmic side of the membrane; that stretch reads QVVWRHAHQIALQQHCLAPPHLAATRKG. The helical transmembrane segment at 278-304 threads the bilayer; the sequence is VGTLAVVLGTFGASWLPFAIYCVVGSH. At 305–309 the chain is on the extracellular side; it reads EDPAV. Residues 310–331 traverse the membrane as a helical segment; the sequence is YTYATLLPATYNSMINPIIYAF. Topologically, residues 332 to 362 are cytoplasmic; sequence RNQEIQRALWLLLCGCFQSKVPFRSRSPSEV. Cysteine 345 carries the S-palmitoyl cysteine lipid modification. 3 positions are modified to phosphoserine: serine 356, serine 358, and serine 360.

Belongs to the G-protein coupled receptor 1 family.

The protein resides in the cell membrane. Orphan receptor with constitutive G(s) signaling activity that activate cyclic AMP. Promotes neurite outgrowth and blocks myelin inhibition in neurons. In Homo sapiens (Human), this protein is G-protein coupled receptor 6 (GPR6).